Reading from the N-terminus, the 387-residue chain is Leucine aminopeptidase 1 (387 aa).

The signal sequence occupies residues 1–18 (MKIRAALALSATASGVLA). The propeptide occupies 19 to 87 (AVVPQQALLN…YPTLHQASNV (69 aa)). N179 is a glycosylation site (N-linked (GlcNAc...) asparagine). Zn(2+) is bound by residues H187, D206, E245, and D272. A disulfide bridge connects residues C321 and C325. A Zn(2+)-binding site is contributed by H354.

It belongs to the peptidase M28 family. M28E subfamily. In terms of assembly, monomer. Requires Zn(2+) as cofactor.

Its subcellular location is the secreted. Functionally, extracellular aminopeptidase that allows assimilation of proteinaceous substrates. The sequence is that of Leucine aminopeptidase 1 (lap1) from Aspergillus oryzae (strain ATCC 42149 / RIB 40) (Yellow koji mold).